We begin with the raw amino-acid sequence, 336 residues long: Cytoskeleton protein RodZ (336 aa).

Topologically, residues methionine 1–glycine 111 are cytoplasmic. Residues leucine 19–leucine 71 form the HTH cro/C1-type domain. Residues glutamine 30–glutamate 49 constitute a DNA-binding region (H-T-H motif). A helical; Signal-anchor for type II membrane protein transmembrane segment spans residues tryptophan 112 to tryptophan 132. Residues tryptophan 133–glutamine 336 are Periplasmic-facing. Positions alanine 152–serine 164 are enriched in low complexity. The tract at residues alanine 152–glutamine 235 is disordered. Composition is skewed to polar residues over residues valine 165–proline 190 and proline 200–valine 217. Residues alanine 220–glutamine 235 are compositionally biased toward low complexity.

The protein belongs to the RodZ family.

The protein resides in the cell inner membrane. Its function is as follows. Cytoskeletal protein that is involved in cell-shape control through regulation of the length of the long axis. In Enterobacter sp. (strain 638), this protein is Cytoskeleton protein RodZ.